The chain runs to 464 residues: tRNA-2-methylthio-N(6)-dimethylallyladenosine synthase (464 aa).

Residues 19 to 135 form the MTTase N-terminal domain; that stretch reads GSYWITTFGC…LENLLGKVDL (117 aa). [4Fe-4S] cluster-binding residues include C28, C64, C98, C170, C174, and C177. A Radical SAM core domain is found at 156-394; sequence RESSICGWVN…DLVEKTARSR (239 aa). Residues 396–464 form the TRAM domain; that stretch reads QRYIDNIESV…PFSLTGELSL (69 aa).

It belongs to the methylthiotransferase family. MiaB subfamily. In terms of assembly, monomer. [4Fe-4S] cluster is required as a cofactor.

The protein localises to the cytoplasm. The enzyme catalyses N(6)-dimethylallyladenosine(37) in tRNA + (sulfur carrier)-SH + AH2 + 2 S-adenosyl-L-methionine = 2-methylsulfanyl-N(6)-dimethylallyladenosine(37) in tRNA + (sulfur carrier)-H + 5'-deoxyadenosine + L-methionine + A + S-adenosyl-L-homocysteine + 2 H(+). Functionally, catalyzes the methylthiolation of N6-(dimethylallyl)adenosine (i(6)A), leading to the formation of 2-methylthio-N6-(dimethylallyl)adenosine (ms(2)i(6)A) at position 37 in tRNAs that read codons beginning with uridine. The sequence is that of tRNA-2-methylthio-N(6)-dimethylallyladenosine synthase from Prochlorococcus marinus (strain MIT 9301).